The primary structure comprises 627 residues: Putative polyketide hydroxylase (627 aa).

Residues Pro22–Arg51 and Tyr309–Asp319 each bind FAD. The tract at residues Ala370–Gln469 is disordered. Positions Ala395–Gln469 are enriched in gly residues.

The protein belongs to the PheA/TfdB FAD monooxygenase family. The cofactor is FAD.

Functionally, involved in developmentally regulated synthesis of a compound biosynthetically related to polyketide antibiotics which is essential for spore color in Streptococcus coelicolor. This is Putative polyketide hydroxylase from Streptomyces coelicolor (strain ATCC BAA-471 / A3(2) / M145).